Here is a 189-residue protein sequence, read N- to C-terminus: Protein osa (189 aa).

Functionally, suppression of A.tumefaciens oncogenicity. This is Protein osa (osa) from Shigella flexneri.